A 186-amino-acid chain; its full sequence is ATP synthase subunit b (186 aa).

The chain crosses the membrane as a helical span at residues 5–25; sequence LILNLLVLLAPAAVFAAGGGH.

The protein belongs to the ATPase B chain family. As to quaternary structure, F-type ATPases have 2 components, F(1) - the catalytic core - and F(0) - the membrane proton channel. F(1) has five subunits: alpha(3), beta(3), gamma(1), delta(1), epsilon(1). F(0) has three main subunits: a(1), b(2) and c(10-14). The alpha and beta chains form an alternating ring which encloses part of the gamma chain. F(1) is attached to F(0) by a central stalk formed by the gamma and epsilon chains, while a peripheral stalk is formed by the delta and b chains.

It is found in the cell inner membrane. F(1)F(0) ATP synthase produces ATP from ADP in the presence of a proton or sodium gradient. F-type ATPases consist of two structural domains, F(1) containing the extramembraneous catalytic core and F(0) containing the membrane proton channel, linked together by a central stalk and a peripheral stalk. During catalysis, ATP synthesis in the catalytic domain of F(1) is coupled via a rotary mechanism of the central stalk subunits to proton translocation. In terms of biological role, component of the F(0) channel, it forms part of the peripheral stalk, linking F(1) to F(0). This Bdellovibrio bacteriovorus (strain ATCC 15356 / DSM 50701 / NCIMB 9529 / HD100) protein is ATP synthase subunit b.